Reading from the N-terminus, the 200-residue chain is N-(5'-phosphoribosyl)anthranilate isomerase (200 aa).

This sequence belongs to the TrpF family.

It carries out the reaction N-(5-phospho-beta-D-ribosyl)anthranilate = 1-(2-carboxyphenylamino)-1-deoxy-D-ribulose 5-phosphate. The protein operates within amino-acid biosynthesis; L-tryptophan biosynthesis; L-tryptophan from chorismate: step 3/5. The polypeptide is N-(5'-phosphoribosyl)anthranilate isomerase (Endomicrobium trichonymphae).